The chain runs to 290 residues: MADLSFIEDTVAFPEKEEDEEEEEEGVEWGYEEGVEWGLVFPDANGEYQSPINLNSREARYDPSLLDVRLSPNYVVCRDCEVTNDGHTIQVILKSKSVLSGGPLPQGHEFELYEVRFHWGRENQRGSEHTVNFKAFPMELHLIHWNSTLFGSIDEAVGKPHGIAIIALFVQIGKEHVGLKAVTEILQDIQYKGKSKTIPCFNPNTLLPDPLLRDYWVYEGSLTIPPCSEGVTWILFRYPLTISQLQIEEFRRLRTHVKGAELVEGCDGILGDNFRPTQPLSDRVIRAAFQ.

A disordered region spans residues 1-26 (MADLSFIEDTVAFPEKEEDEEEEEEG). Ser5 is modified (phosphoserine). A compositionally biased stretch (acidic residues) spans 16 to 26 (KEEDEEEEEEG). Residues 27–289 (VEWGYEEGVE…LSDRVIRAAF (263 aa)) enclose the Alpha-carbonic anhydrase domain. His87 acts as the Proton donor/acceptor in catalysis. 2 residues coordinate Zn(2+): His118 and His141.

The protein belongs to the alpha-carbonic anhydrase family.

Its function is as follows. Does not have a carbonic anhydrase catalytic activity. This is Carbonic anhydrase-related protein (CA8) from Homo sapiens (Human).